The chain runs to 145 residues: D-aminoacyl-tRNA deacylase (145 aa).

The short motif at 137 to 138 is the Gly-cisPro motif, important for rejection of L-amino acids element; the sequence is GP.

It belongs to the DTD family. Homodimer.

The protein resides in the cytoplasm. It carries out the reaction glycyl-tRNA(Ala) + H2O = tRNA(Ala) + glycine + H(+). The catalysed reaction is a D-aminoacyl-tRNA + H2O = a tRNA + a D-alpha-amino acid + H(+). In terms of biological role, an aminoacyl-tRNA editing enzyme that deacylates mischarged D-aminoacyl-tRNAs. Also deacylates mischarged glycyl-tRNA(Ala), protecting cells against glycine mischarging by AlaRS. Acts via tRNA-based rather than protein-based catalysis; rejects L-amino acids rather than detecting D-amino acids in the active site. By recycling D-aminoacyl-tRNA to D-amino acids and free tRNA molecules, this enzyme counteracts the toxicity associated with the formation of D-aminoacyl-tRNA entities in vivo and helps enforce protein L-homochirality. This chain is D-aminoacyl-tRNA deacylase, found in Saccharophagus degradans (strain 2-40 / ATCC 43961 / DSM 17024).